We begin with the raw amino-acid sequence, 373 residues long: 3 beta-hydroxysteroid dehydrogenase/Delta 5--&gt;4-isomerase type 2 (373 aa).

The active-site Proton acceptor is the Tyr-155. Lys-159 is a binding site for NAD(+). Residues 288 to 308 (VALLYWLGFLLELVNFLLRPV) form a helical membrane-spanning segment.

This sequence belongs to the 3-beta-HSD family. As to expression, high levels in adrenal gland, kidney and male liver. Low levels in female liver.

The protein localises to the endoplasmic reticulum membrane. Its subcellular location is the mitochondrion membrane. It carries out the reaction a 3beta-hydroxy-Delta(5)-steroid + NAD(+) = a 3-oxo-Delta(5)-steroid + NADH + H(+). The enzyme catalyses a 3-oxo-Delta(5)-steroid = a 3-oxo-Delta(4)-steroid. The catalysed reaction is pregnenolone + NAD(+) = pregn-5-ene-3,20-dione + NADH + H(+). It catalyses the reaction pregn-5-ene-3,20-dione = progesterone. It carries out the reaction 3beta-hydroxyandrost-5-en-17-one + NAD(+) = androst-5-ene-3,17-dione + NADH + H(+). The enzyme catalyses androst-5-ene-3,17-dione = androst-4-ene-3,17-dione. Its pathway is lipid metabolism; steroid biosynthesis. Its function is as follows. 3-beta-HSD is a bifunctional enzyme, that catalyzes the oxidative conversion of Delta(5)-ene-3-beta-hydroxy steroid, and the oxidative conversion of ketosteroids. The 3-beta-HSD enzymatic system plays a crucial role in the biosynthesis of all classes of hormonal steroids. This chain is 3 beta-hydroxysteroid dehydrogenase/Delta 5--&gt;4-isomerase type 2 (HSD3B2), found in Mesocricetus auratus (Golden hamster).